We begin with the raw amino-acid sequence, 178 residues long: uncharacterized protein (178 aa).

Transmembrane regions (helical) follow at residues 1–21 (MISIYLFMAFFIANLLGYGGG), 47–67 (MLALANALPGPIATKIAAYVG), 75–95 (GFLIALIATVVPSALALIVLL), 117–137 (VIAVMMLILTWQIGADGIKAI), and 158–178 (MHPAFLIIAAFLYGGLVIPYL).

This sequence belongs to the chromate ion transporter (CHR) (TC 2.A.51) family.

Its subcellular location is the cell membrane. This is an uncharacterized protein from Bacillus subtilis (strain 168).